A 216-amino-acid chain; its full sequence is Guanylate kinase (216 aa).

Residues 11-189 (GVLIVISGPS…AVKKIEAILL (179 aa)) enclose the Guanylate kinase-like domain. 18 to 25 (GPSGAGKG) is an ATP binding site.

The protein belongs to the guanylate kinase family.

The protein resides in the cytoplasm. It catalyses the reaction GMP + ATP = GDP + ADP. Essential for recycling GMP and indirectly, cGMP. In Clostridium perfringens (strain SM101 / Type A), this protein is Guanylate kinase.